We begin with the raw amino-acid sequence, 279 residues long: Lysozyme-like protein 2 (279 aa).

The N-terminal stretch at 1–19 (MIKLLVSFTILFVLSSARP) is a signal peptide. In terms of domain architecture, Ch-type lysozyme spans 47 to 265 (MGNAVDFSFP…AAAPKTEVNM (219 aa)).

The protein belongs to the glycosyl hydrolase 25 family. As to expression, expressed in intestine.

Involved in resistance to Gram-positive bacteria P.aeruginosa or B.thuringiensis infection. The polypeptide is Lysozyme-like protein 2 (Caenorhabditis elegans).